A 484-amino-acid chain; its full sequence is PTS system MurNAc-GlcNAc-specific EIIBC component (484 aa).

The region spanning 5–87 (QQLAERIIAA…AELSGVKLGD (83 aa)) is the PTS EIIB type-1 domain. Catalysis depends on cysteine 27, which acts as the Phosphocysteine intermediate; for EIIB activity. The PTS EIIC type-1 domain occupies 130-484 (KSIANIFIPL…AMRQTDLLGD (355 aa)). A run of 10 helical transmembrane segments spans residues 135-155 (IFIP…IAAV), 160-180 (MVAG…FNVI), 200-220 (FGAT…TGIA), 234-254 (LQPG…LSIV), 274-294 (IALL…AGFV), 305-325 (IISI…LPLV), 349-369 (LLPI…ALWV), 384-404 (ALPV…TLPL), 408-428 (FLTA…IGHI), and 450-470 (LGYI…TYLF).

The protein resides in the cell membrane. The catalysed reaction is N-acetyl-beta-D-muramate-(1-&gt;4)-N-acetyl-D-glucosamine(out) + N(pros)-phospho-L-histidyl-[protein] = 6-phospho-N-acetyl-beta-D-muramate-(1-&gt;4)-N-acetyl-D-glucosamine(in) + L-histidyl-[protein]. The protein operates within cell wall biogenesis; peptidoglycan recycling. Its function is as follows. The phosphoenolpyruvate-dependent sugar phosphotransferase system (sugar PTS), a major carbohydrate active transport system, catalyzes the phosphorylation of incoming sugar substrates concomitantly with their translocation across the cell membrane. This system is involved in the uptake and phosphorylation of MurNAc-GlcNAc, the principle peptidoglycan turnover product of S.aureus, yielding cytoplasmic MurNAc 6P-GlcNAc. In Staphylococcus aureus (strain bovine RF122 / ET3-1), this protein is PTS system MurNAc-GlcNAc-specific EIIBC component.